The chain runs to 406 residues: 2-epi-valiolone synthase (406 aa).

The interval 1–21 (MPSTGSTPILAHDVKSPHRGS) is disordered. Residues 105–108 (EPSK), 137–141 (GVLCD), 161–162 (TS), lysine 174, lysine 183, and 201–204 (CLAT) contribute to the NAD(+) site. Zn(2+)-binding residues include glutamate 216, histidine 287, and histidine 304.

It belongs to the sugar phosphate cyclases superfamily. EVS family. Requires NAD(+) as cofactor. The cofactor is Co(2+). Zn(2+) is required as a cofactor.

It catalyses the reaction D-sedoheptulose 7-phosphate = 2-epi-valiolone + phosphate. Catalyzes the conversion of sedoheptulose 7-phosphate to 2-epi-valiolone, which may serve as an alternative precursor for aminocyclitol biosynthesis. This chain is 2-epi-valiolone synthase, found in Stigmatella aurantiaca (strain DW4/3-1).